Here is a 460-residue protein sequence, read N- to C-terminus: tRNA modification GTPase MnmE (460 aa).

Positions 29, 91, and 131 each coordinate (6S)-5-formyl-5,6,7,8-tetrahydrofolate. Residues 226–383 (GLRVALVGRP…LVQAVLERCG (158 aa)) form the TrmE-type G domain. Position 236 (Asn236) interacts with K(+). GTP-binding positions include 236–241 (NVGKSS), 255–261 (TDLPGTT), and 280–283 (DTAG). A Mg(2+)-binding site is contributed by Ser240. K(+) is bound by residues Thr255, Leu257, and Thr260. A Mg(2+)-binding site is contributed by Thr261. (6S)-5-formyl-5,6,7,8-tetrahydrofolate is bound at residue Lys460.

The protein belongs to the TRAFAC class TrmE-Era-EngA-EngB-Septin-like GTPase superfamily. TrmE GTPase family. Homodimer. Heterotetramer of two MnmE and two MnmG subunits. It depends on K(+) as a cofactor.

It is found in the cytoplasm. Functionally, exhibits a very high intrinsic GTPase hydrolysis rate. Involved in the addition of a carboxymethylaminomethyl (cmnm) group at the wobble position (U34) of certain tRNAs, forming tRNA-cmnm(5)s(2)U34. This is tRNA modification GTPase MnmE from Synechococcus sp. (strain WH7803).